A 351-amino-acid chain; its full sequence is MTQAWWRDACQPLDNAAMDQARARQQQLTKPAGSLGQLEALAIQLAGLQGLERPTLDQVAITIFAGDHGVVEEGISAYPQAVTGQMLCNFVGGGAAISVLARQLQASLDVVDLGTIDAQLELPGVRHLRLGTGTANFARQPAMTENQLQAALQAGRDSAQRGAEQGAQLFIGGEMGIGNTTAAAALASVLLGCPASELSGPGTGLDNAGVQHKAEVIERALRLHGLRAEDPLQVLGCVGGFEIAALVGAYIGCAQAGVAVLVDGFICSVAALVAVRLNPQCRAWLLFAHQGAEPGHKTLLAALQAEPLLALGLRLGEGSGAALAVPLLRLACALHGQMATFAEAAVADRPA.

Catalysis depends on glutamate 317, which acts as the Proton acceptor.

The protein belongs to the CobT family.

It carries out the reaction 5,6-dimethylbenzimidazole + nicotinate beta-D-ribonucleotide = alpha-ribazole 5'-phosphate + nicotinate + H(+). It functions in the pathway nucleoside biosynthesis; alpha-ribazole biosynthesis; alpha-ribazole from 5,6-dimethylbenzimidazole: step 1/2. In terms of biological role, catalyzes the synthesis of alpha-ribazole-5'-phosphate from nicotinate mononucleotide (NAMN) and 5,6-dimethylbenzimidazole (DMB). The chain is Nicotinate-nucleotide--dimethylbenzimidazole phosphoribosyltransferase from Pseudomonas putida (strain ATCC 700007 / DSM 6899 / JCM 31910 / BCRC 17059 / LMG 24140 / F1).